Reading from the N-terminus, the 290-residue chain is Sodium/potassium-transporting ATPase subunit beta-2 (290 aa).

Residues 1–39 (MVIQKEKKSCGQVVEEWKEFVWNPRTHQFMGRTGTSWAF) lie on the Cytoplasmic side of the membrane. Residues 40–67 (ILLFYLVFYGFLTAMFTLTMWVMLQTVS) form a helical; Signal-anchor for type II membrane protein membrane-spanning segment. The Extracellular portion of the chain corresponds to 68–290 (EHTPKYQDRL…VAFKLRINKT (223 aa)). N-linked (GlcNAc...) asparagine glycosylation is found at N96 and N118. A disulfide bond links C129 and C150. 2 N-linked (GlcNAc...) asparagine glycosylation sites follow: N153 and N159. C160 and C177 form a disulfide bridge. N-linked (GlcNAc...) asparagine glycans are attached at residues N193, N197, and N238. Positions 193 to 290 (NQSMNVTCAG…VAFKLRINKT (98 aa)) are immunoglobulin-like. Residues C200 and C261 are joined by a disulfide bond.

Belongs to the X(+)/potassium ATPases subunit beta family. As to quaternary structure, the sodium/potassium-transporting ATPase is composed of a catalytic alpha subunit, an auxiliary non-catalytic beta subunit and an additional regulatory subunit. Interacts with BSG.

The protein localises to the cell membrane. Its function is as follows. This is the non-catalytic component of the active enzyme, which catalyzes the hydrolysis of ATP coupled with the exchange of Na(+) and K(+) ions across the plasma membrane. The exact function of the beta-2 subunit is not known. In terms of biological role, mediates cell adhesion of neurons and astrocytes, and promotes neurite outgrowth. The chain is Sodium/potassium-transporting ATPase subunit beta-2 (ATP1B2) from Oryctolagus cuniculus (Rabbit).